Reading from the N-terminus, the 633-residue chain is Lysophospholipase 1 (633 aa).

The signal sequence occupies residues 1–20; it reads MKTTTVACAVAGLLFSCVSG. The 548-residue stretch at 47–594 folds into the PLA2c domain; sequence GCPASRPTIR…QRYCWDGSLN (548 aa). Residues Asn64, Asn104, Asn139, Asn173, Asn246, Asn290, Asn329, Asn358, Asn397, Asn450, Asn463, Asn469, Asn497, Asn500, Asn521, Asn549, Asn555, and Asn594 are each glycosylated (N-linked (GlcNAc...) asparagine). Residue Ser609 is the site of GPI-like-anchor amidated serine attachment. A propeptide spans 610–633 (removed in mature form); sequence AASGIIPSISTVAMAVVFAAWTIF.

Belongs to the lysophospholipase family. Post-translationally, the GPI-like anchor contains a phosphoceramide lipid group. The anchor position has not been determined.

The protein localises to the cell membrane. It catalyses the reaction a 1-acyl-sn-glycero-3-phosphocholine + H2O = sn-glycerol 3-phosphocholine + a fatty acid + H(+). Catalyzes the release of fatty acids from lysophospholipids. This is Lysophospholipase 1 (plb1) from Aspergillus fumigatus (strain CBS 144.89 / FGSC A1163 / CEA10) (Neosartorya fumigata).